A 229-amino-acid polypeptide reads, in one-letter code: Ribosome maturation factor RimM (229 aa).

Positions 1 to 21 (MAGHDSGNAKRGRSPSFGVFV) are disordered. Residues 148-229 (ADEFYWVDLI…RVVVDWEADY (82 aa)) form the PRC barrel domain.

It belongs to the RimM family. In terms of assembly, binds ribosomal protein uS19.

It is found in the cytoplasm. Functionally, an accessory protein needed during the final step in the assembly of 30S ribosomal subunit, possibly for assembly of the head region. Essential for efficient processing of 16S rRNA. May be needed both before and after RbfA during the maturation of 16S rRNA. It has affinity for free ribosomal 30S subunits but not for 70S ribosomes. The polypeptide is Ribosome maturation factor RimM (Burkholderia mallei (strain NCTC 10247)).